The primary structure comprises 251 residues: Proteasome subunit alpha type-7 (251 aa).

Belongs to the peptidase T1A family. The 26S proteasome consists of a 20S proteasome core and two 19S regulatory subunits. The 20S proteasome core is composed of 28 subunits that are arranged in four stacked rings, resulting in a barrel-shaped structure. The two end rings are each formed by seven alpha subunits, and the two central rings are each formed by seven beta subunits. The catalytic chamber with the active sites is on the inside of the barrel.

The protein localises to the cytoplasm. It is found in the nucleus. Functionally, the proteasome is a multicatalytic proteinase complex which is characterized by its ability to cleave peptides with Arg, Phe, Tyr, Leu, and Glu adjacent to the leaving group at neutral or slightly basic pH. The proteasome has an ATP-dependent proteolytic activity. The polypeptide is Proteasome subunit alpha type-7 (psma7) (Carassius auratus (Goldfish)).